A 79-amino-acid polypeptide reads, in one-letter code: RNA-binding protein Hfq (79 aa).

The Sm domain maps to 10–69 (DPFLNALRKEHVPVSIYLVNGIKLQGNIESFDQYVVLLRNTVTQMVYKHAISTVVPARPV).

It belongs to the Hfq family. As to quaternary structure, homohexamer.

In terms of biological role, RNA chaperone that binds small regulatory RNA (sRNAs) and mRNAs to facilitate mRNA translational regulation in response to envelope stress, environmental stress and changes in metabolite concentrations. Also binds with high specificity to tRNAs. This chain is RNA-binding protein Hfq, found in Burkholderia cenocepacia (strain HI2424).